We begin with the raw amino-acid sequence, 612 residues long: Elongation factor 4 (612 aa).

Residues 12-194 enclose the tr-type G domain; the sequence is SRIRNFSIIA…QIVEKVPAPT (183 aa). GTP contacts are provided by residues 24 to 29 and 141 to 144; these read DHGKST and NKID.

The protein belongs to the TRAFAC class translation factor GTPase superfamily. Classic translation factor GTPase family. LepA subfamily.

Its subcellular location is the cell membrane. It catalyses the reaction GTP + H2O = GDP + phosphate + H(+). Functionally, required for accurate and efficient protein synthesis under certain stress conditions. May act as a fidelity factor of the translation reaction, by catalyzing a one-codon backward translocation of tRNAs on improperly translocated ribosomes. Back-translocation proceeds from a post-translocation (POST) complex to a pre-translocation (PRE) complex, thus giving elongation factor G a second chance to translocate the tRNAs correctly. Binds to ribosomes in a GTP-dependent manner. This Bacillus subtilis (strain 168) protein is Elongation factor 4.